The following is a 116-amino-acid chain: Ribosome-binding factor A (116 aa).

It belongs to the RbfA family. Monomer. Binds 30S ribosomal subunits, but not 50S ribosomal subunits or 70S ribosomes.

It localises to the cytoplasm. One of several proteins that assist in the late maturation steps of the functional core of the 30S ribosomal subunit. Associates with free 30S ribosomal subunits (but not with 30S subunits that are part of 70S ribosomes or polysomes). Required for efficient processing of 16S rRNA. May interact with the 5'-terminal helix region of 16S rRNA. This is Ribosome-binding factor A from Streptococcus pneumoniae (strain Hungary19A-6).